Consider the following 60-residue polypeptide: Large ribosomal subunit protein uL30 (60 aa).

This sequence belongs to the universal ribosomal protein uL30 family. Part of the 50S ribosomal subunit.

The polypeptide is Large ribosomal subunit protein uL30 (Acidothermus cellulolyticus (strain ATCC 43068 / DSM 8971 / 11B)).